We begin with the raw amino-acid sequence, 92 residues long: Acyl-CoA-binding domain-containing protein 6 (92 aa).

Residues 3–88 (LKEEFEEHAE…VKQLLEVAAS (86 aa)) enclose the ACB domain. Residues 30 to 34 (YGLYK), lysine 52, lysine 56, and tyrosine 75 each bind an acyl-CoA.

It belongs to the ACBP family. Interacts with PDLP8. As to expression, mostly expressed in seeds, stems, and siliques, and, to a lower extent, in leaves, flowers, and roots (at protein level). Highly expressed in root and shoot phloem companion cells.

The protein resides in the cytoplasm. It localises to the cell membrane. Functionally, binds medium- and long-chain acyl-CoA esters with very high affinity. May function as an intracellular carrier of acyl-CoA esters. Confers resistance to cold and freezing. Interacts with phosphatidylcholine and derivatives, but not phosphatidic acid and lysophosphatidylcholine. May be involved in phospholipid metabolism. This chain is Acyl-CoA-binding domain-containing protein 6 (ACBP6), found in Arabidopsis thaliana (Mouse-ear cress).